The primary structure comprises 234 residues: Probable transcriptional regulatory protein MYCGA1330 (234 aa).

This sequence belongs to the TACO1 family.

The protein localises to the cytoplasm. This is Probable transcriptional regulatory protein MYCGA1330 from Mycoplasmoides gallisepticum (strain R(low / passage 15 / clone 2)) (Mycoplasma gallisepticum).